A 574-amino-acid polypeptide reads, in one-letter code: Proline--tRNA ligase (574 aa).

Belongs to the class-II aminoacyl-tRNA synthetase family. ProS type 1 subfamily. In terms of assembly, homodimer.

It localises to the cytoplasm. It carries out the reaction tRNA(Pro) + L-proline + ATP = L-prolyl-tRNA(Pro) + AMP + diphosphate. Functionally, catalyzes the attachment of proline to tRNA(Pro) in a two-step reaction: proline is first activated by ATP to form Pro-AMP and then transferred to the acceptor end of tRNA(Pro). As ProRS can inadvertently accommodate and process non-cognate amino acids such as alanine and cysteine, to avoid such errors it has two additional distinct editing activities against alanine. One activity is designated as 'pretransfer' editing and involves the tRNA(Pro)-independent hydrolysis of activated Ala-AMP. The other activity is designated 'posttransfer' editing and involves deacylation of mischarged Ala-tRNA(Pro). The misacylated Cys-tRNA(Pro) is not edited by ProRS. The polypeptide is Proline--tRNA ligase (Thioalkalivibrio sulfidiphilus (strain HL-EbGR7)).